A 428-amino-acid chain; its full sequence is Ribulose bisphosphate carboxylase (428 aa).

Lys151 functions as the Proton acceptor in the catalytic mechanism. Lys153 is a binding site for substrate. Mg(2+) contacts are provided by Lys177, Asp179, and Glu180. Residue Lys177 is modified to N6-carboxylysine. The Proton acceptor role is filled by His270. Residues Arg271, His303, 354–356 (SGG), and 376–379 (QFGG) each bind substrate.

It belongs to the RuBisCO large chain family. Type III subfamily. Homodimer or homodecamer. In contrast to form I RuBisCO, the form III RuBisCO is composed solely of large subunits. Requires Mg(2+) as cofactor.

It carries out the reaction 2 (2R)-3-phosphoglycerate + 2 H(+) = D-ribulose 1,5-bisphosphate + CO2 + H2O. The catalysed reaction is D-ribulose 1,5-bisphosphate + O2 = 2-phosphoglycolate + (2R)-3-phosphoglycerate + 2 H(+). Its function is as follows. Catalyzes the addition of molecular CO(2) and H(2)O to ribulose 1,5-bisphosphate (RuBP), generating two molecules of 3-phosphoglycerate (3-PGA). Functions in an archaeal AMP degradation pathway, together with AMP phosphorylase and R15P isomerase. This is Ribulose bisphosphate carboxylase from Methanosarcina barkeri (strain Fusaro / DSM 804).